We begin with the raw amino-acid sequence, 529 residues long: uncharacterized protein (529 aa).

Residues 354 to 373 (FHVASFPWISWAILGSYIML) form a helical membrane-spanning segment.

Its subcellular location is the host membrane. This is an uncharacterized protein from Acidianus convivator (ATV).